A 443-amino-acid polypeptide reads, in one-letter code: Xaa-Pro dipeptidase (443 aa).

5 residues coordinate Mn(2+): Asp-246, Asp-257, His-339, Glu-384, and Glu-423.

Belongs to the peptidase M24B family. Bacterial-type prolidase subfamily. Mn(2+) serves as cofactor.

The catalysed reaction is Xaa-L-Pro dipeptide + H2O = an L-alpha-amino acid + L-proline. In terms of biological role, splits dipeptides with a prolyl residue in the C-terminal position. This Salmonella choleraesuis (strain SC-B67) protein is Xaa-Pro dipeptidase.